Consider the following 218-residue polypeptide: Adenylate kinase (218 aa).

10 to 15 (GAGKGT) is a binding site for ATP. Residues 30-59 (STGDMLRAAVKAGTPLGLEAKKVMDAGGLV) form an NMP region. AMP is bound by residues Thr31, Arg36, 57–59 (GLV), 85–88 (GFPR), and Gln92. An LID region spans residues 122-159 (ERRVHPASGRSYHVRFNPPKAEGVDDVTGEPLVQRDDD). ATP contacts are provided by residues Arg123 and 132–133 (SY). Residues Arg156 and Arg167 each contribute to the AMP site. Gly203 is a binding site for ATP.

Belongs to the adenylate kinase family. Monomer.

The protein localises to the cytoplasm. It carries out the reaction AMP + ATP = 2 ADP. Its pathway is purine metabolism; AMP biosynthesis via salvage pathway; AMP from ADP: step 1/1. In terms of biological role, catalyzes the reversible transfer of the terminal phosphate group between ATP and AMP. Plays an important role in cellular energy homeostasis and in adenine nucleotide metabolism. The chain is Adenylate kinase from Bordetella pertussis (strain Tohama I / ATCC BAA-589 / NCTC 13251).